Here is a 146-residue protein sequence, read N- to C-terminus: Stress-responsive DNAJB4-interacting membrane protein 1 (146 aa).

A signal peptide spans 1–26 (MWPAPCSVGRLLIFFMCSSSGYVVQG). The Extracellular segment spans residues 27 to 66 (CGPSPGARTTLGSPLSLWSIKTPSHIFCTRRAINLGFPSP). The helical transmembrane segment at 67 to 87 (PLVQLIFWSLNAGLDLYLCLI) threads the bilayer. The Cytoplasmic segment spans residues 88 to 94 (SSCGFSQ). The chain crosses the membrane as a helical span at residues 95 to 115 (VFWPVEAFCSFSLSFFALALS). At 116–146 (HKFVICRLDQHIFSGFTKSLKNLPPCHRTDI) the chain is on the extracellular side.

Homodimer. Interacts with DNAJB4. Expressed in brain with higher detection in neurons than astrocytes. Decreased expression in Alzheimer brains. Detected at protein level in brain and cervix.

The protein localises to the membrane. Functionally, promotes neuronal cells survival to stress conditions. The polypeptide is Stress-responsive DNAJB4-interacting membrane protein 1 (SDIM1) (Homo sapiens (Human)).